The chain runs to 477 residues: RNA pseudouridine synthase 4, mitochondrial (477 aa).

The transit peptide at 1–43 directs the protein to the mitochondrion; the sequence is MAKWRLATATLRRQLQSSSPTISTFKNPTKALSAAAHQSTRSY. Positions 34-55 are disordered; it reads AAAHQSTRSYSTTQTDDSRGKW. The span at 36-48 shows a compositional bias: polar residues; that stretch reads AHQSTRSYSTTQT. Residues 90–175 form the S4 RNA-binding domain; it reads TTALRWILRC…AKKESFQCSD (86 aa). The active site involves Asp-236.

Belongs to the pseudouridine synthase RluA family.

The protein resides in the mitochondrion. It catalyses the reaction a uridine in RNA = a pseudouridine in RNA. The polypeptide is RNA pseudouridine synthase 4, mitochondrial (Arabidopsis thaliana (Mouse-ear cress)).